Consider the following 334-residue polypeptide: MSTFYQKPFLKLLDFTASELTALLQLAAKLKADKKNGKEEQKLVGKNIALIFEKDSTRTRCSFEVAAYDQGARVTYLGSSGSQIGHKESIKDTARVLGRMFDGIQYRGYGQEIVETLAEYSGVPVWNGLTDEYHPTQLLADLLTMQEHLPGKAFNEMTLVYAGDARNNMGNSMLEAAALTGLDLRLVAPKACWPQAALVAECSAMAKKNGGAITLTEDIASGVKGADFIYTDVWVSMGEPKEKWAERIALLRDYQVNSQMMALTGNPQVKFLHCLPAFHDDETTLGKKMAEEYGLHGGMEVTDEVFESAASIVFDEAENRMHTIKAVMVATLSK.

Carbamoyl phosphate is bound by residues 56-59 (STRT), Gln-83, Arg-107, and 134-137 (HPTQ). L-ornithine-binding positions include Asn-168, Asp-232, and 236 to 237 (SM). Carbamoyl phosphate contacts are provided by residues 274–275 (CL) and Arg-320.

It belongs to the aspartate/ornithine carbamoyltransferase superfamily. OTCase family. As to quaternary structure, homotrimer.

The protein resides in the cytoplasm. It carries out the reaction carbamoyl phosphate + L-ornithine = L-citrulline + phosphate + H(+). The protein operates within amino-acid biosynthesis; L-arginine biosynthesis; L-arginine from L-ornithine and carbamoyl phosphate: step 1/3. Its function is as follows. Reversibly catalyzes the transfer of the carbamoyl group from carbamoyl phosphate (CP) to the N(epsilon) atom of ornithine (ORN) to produce L-citrulline. The polypeptide is Ornithine carbamoyltransferase (argI) (Salmonella typhimurium (strain LT2 / SGSC1412 / ATCC 700720)).